The sequence spans 354 residues: Uroporphyrinogen decarboxylase (354 aa).

Residues 27-31 (RQAGR), D77, Y154, T209, and H327 contribute to the substrate site.

It belongs to the uroporphyrinogen decarboxylase family. Homodimer.

The protein localises to the cytoplasm. The enzyme catalyses uroporphyrinogen III + 4 H(+) = coproporphyrinogen III + 4 CO2. Its pathway is porphyrin-containing compound metabolism; protoporphyrin-IX biosynthesis; coproporphyrinogen-III from 5-aminolevulinate: step 4/4. Its function is as follows. Catalyzes the decarboxylation of four acetate groups of uroporphyrinogen-III to yield coproporphyrinogen-III. In Salmonella heidelberg (strain SL476), this protein is Uroporphyrinogen decarboxylase.